The primary structure comprises 301 residues: ATP synthase gamma chain (301 aa).

The protein belongs to the ATPase gamma chain family. In terms of assembly, F-type ATPases have 2 components, CF(1) - the catalytic core - and CF(0) - the membrane proton channel. CF(1) has five subunits: alpha(3), beta(3), gamma(1), delta(1), epsilon(1). CF(0) has three main subunits: a, b and c.

The protein resides in the cell inner membrane. Its function is as follows. Produces ATP from ADP in the presence of a proton gradient across the membrane. The gamma chain is believed to be important in regulating ATPase activity and the flow of protons through the CF(0) complex. This chain is ATP synthase gamma chain, found in Bordetella bronchiseptica (strain ATCC BAA-588 / NCTC 13252 / RB50) (Alcaligenes bronchisepticus).